The following is a 299-amino-acid chain: ATP phosphoribosyltransferase (299 aa).

Belongs to the ATP phosphoribosyltransferase family. Long subfamily. Mg(2+) serves as cofactor.

The protein resides in the cytoplasm. It catalyses the reaction 1-(5-phospho-beta-D-ribosyl)-ATP + diphosphate = 5-phospho-alpha-D-ribose 1-diphosphate + ATP. It participates in amino-acid biosynthesis; L-histidine biosynthesis; L-histidine from 5-phospho-alpha-D-ribose 1-diphosphate: step 1/9. Its activity is regulated as follows. Feedback inhibited by histidine. In terms of biological role, catalyzes the condensation of ATP and 5-phosphoribose 1-diphosphate to form N'-(5'-phosphoribosyl)-ATP (PR-ATP). Has a crucial role in the pathway because the rate of histidine biosynthesis seems to be controlled primarily by regulation of HisG enzymatic activity. In Pasteurella multocida (strain Pm70), this protein is ATP phosphoribosyltransferase (hisG).